A 434-amino-acid polypeptide reads, in one-letter code: 3-phosphoshikimate 1-carboxyvinyltransferase (434 aa).

3-phosphoshikimate contacts are provided by Lys15, Ser16, and Arg20. Lys15 serves as a coordination point for phosphoenolpyruvate. Residues Gly96 and Arg124 each coordinate phosphoenolpyruvate. The 3-phosphoshikimate site is built by Ser169, Gln171, Ser195, Asp319, and Lys346. Residue Gln171 coordinates phosphoenolpyruvate. Residue Asp319 is the Proton acceptor of the active site. Arg350 and Arg394 together coordinate phosphoenolpyruvate.

Belongs to the EPSP synthase family. As to quaternary structure, monomer.

Its subcellular location is the cytoplasm. It carries out the reaction 3-phosphoshikimate + phosphoenolpyruvate = 5-O-(1-carboxyvinyl)-3-phosphoshikimate + phosphate. Its pathway is metabolic intermediate biosynthesis; chorismate biosynthesis; chorismate from D-erythrose 4-phosphate and phosphoenolpyruvate: step 6/7. Functionally, catalyzes the transfer of the enolpyruvyl moiety of phosphoenolpyruvate (PEP) to the 5-hydroxyl of shikimate-3-phosphate (S3P) to produce enolpyruvyl shikimate-3-phosphate and inorganic phosphate. The protein is 3-phosphoshikimate 1-carboxyvinyltransferase of Chlorobium phaeobacteroides (strain DSM 266 / SMG 266 / 2430).